The primary structure comprises 198 residues: tRNA (pseudouridine(54)-N(1))-methyltransferase (198 aa).

S-adenosyl-L-methionine is bound by residues Leu-130, Gly-153, 176–181, and Cys-186; that span reads LSPLEL.

It belongs to the methyltransferase superfamily. TrmY family. In terms of assembly, homodimer.

Its subcellular location is the cytoplasm. The catalysed reaction is pseudouridine(54) in tRNA + S-adenosyl-L-methionine = N(1)-methylpseudouridine(54) in tRNA + S-adenosyl-L-homocysteine + H(+). Functionally, specifically catalyzes the N1-methylation of pseudouridine at position 54 (Psi54) in tRNAs. In Methanococcus maripaludis (strain C5 / ATCC BAA-1333), this protein is tRNA (pseudouridine(54)-N(1))-methyltransferase.